The sequence spans 580 residues: MPSGSSESPADALRASDSTPDIKPRSRDVTDGLEKTAARGMLRAVGMGDDDWVKPQIGVGSSWNEITPCNMSLQRLAQSVKGGVHSAGGFPLEFGTISVSDGISMGHEGMHFSLVSREVIADSVETVVQAERLDGTVLLAGCDKSIPGMLMAAARLDLASVFLYNGSIMPGVAKLTDGSEREVTIIDAFEAVGACARGLMSREDVDIIERAICPGEGACGGMYTANTMASAAEALGMSLPGSASPVAIDKRRDEYARRSGEAVVEMLRRGITARDILTKEAFENAIAVVMAFGGSTNAVLHLLAIAWEANVKLTLEDFTRVGQKVPHLADVKPFGRHVMKHVDEIGGVPVVMKALLDAGLMHGDCLTVTGETMAENLAHIEPPDPDGKVLRAMNNPIHPTGGITILHGSLAPEGAVVKSAGFDSDVFEGTARVFERERAALDALEDGTITHGDVVVIRYEGPKGGPGMREMLAITGAIKGAGLGKDVLLMTDGRFSGGTTGLCVGHIAPEAVDGGPIAFVRDGDRIRLDVAKGTLDLLVDEAEFESRKAGFEPLPPVYTTGVLAKYTKLVGSAAVGAVCG.

The tract at residues 1–31 (MPSGSSESPADALRASDSTPDIKPRSRDVTD) is disordered. The span at 20 to 31 (PDIKPRSRDVTD) shows a compositional bias: basic and acidic residues. Position 69 (cysteine 69) interacts with [2Fe-2S] cluster. Residue aspartate 101 coordinates Mg(2+). Cysteine 142 serves as a coordination point for [2Fe-2S] cluster. Aspartate 143 and lysine 144 together coordinate Mg(2+). N6-carboxylysine is present on lysine 144. [2Fe-2S] cluster is bound at residue cysteine 219. A Mg(2+)-binding site is contributed by glutamate 470. Catalysis depends on serine 496, which acts as the Proton acceptor.

Belongs to the IlvD/Edd family. In terms of assembly, homodimer. It depends on [2Fe-2S] cluster as a cofactor. Requires Mg(2+) as cofactor.

It catalyses the reaction (2R)-2,3-dihydroxy-3-methylbutanoate = 3-methyl-2-oxobutanoate + H2O. The enzyme catalyses (2R,3R)-2,3-dihydroxy-3-methylpentanoate = (S)-3-methyl-2-oxopentanoate + H2O. It participates in amino-acid biosynthesis; L-isoleucine biosynthesis; L-isoleucine from 2-oxobutanoate: step 3/4. Its pathway is amino-acid biosynthesis; L-valine biosynthesis; L-valine from pyruvate: step 3/4. Functionally, functions in the biosynthesis of branched-chain amino acids. Catalyzes the dehydration of (2R,3R)-2,3-dihydroxy-3-methylpentanoate (2,3-dihydroxy-3-methylvalerate) into 2-oxo-3-methylpentanoate (2-oxo-3-methylvalerate) and of (2R)-2,3-dihydroxy-3-methylbutanoate (2,3-dihydroxyisovalerate) into 2-oxo-3-methylbutanoate (2-oxoisovalerate), the penultimate precursor to L-isoleucine and L-valine, respectively. This is Dihydroxy-acid dehydratase from Mycobacterium sp. (strain JLS).